Consider the following 129-residue polypeptide: Small ribosomal subunit protein uS11 (129 aa).

This sequence belongs to the universal ribosomal protein uS11 family. Part of the 30S ribosomal subunit. Interacts with proteins S7 and S18. Binds to IF-3.

Its function is as follows. Located on the platform of the 30S subunit, it bridges several disparate RNA helices of the 16S rRNA. Forms part of the Shine-Dalgarno cleft in the 70S ribosome. The sequence is that of Small ribosomal subunit protein uS11 from Glaesserella parasuis serovar 5 (strain SH0165) (Haemophilus parasuis).